The following is a 358-amino-acid chain: 3-dehydroquinate synthase (358 aa).

NAD(+) is bound by residues 104–108 (GVIGD), 128–129 (TT), Lys-140, Lys-149, and 167–170 (FLNT). The Zn(2+) site is built by Glu-182, His-246, and His-260.

It belongs to the sugar phosphate cyclases superfamily. Dehydroquinate synthase family. Requires Co(2+) as cofactor. Zn(2+) is required as a cofactor. It depends on NAD(+) as a cofactor.

The protein resides in the cytoplasm. It catalyses the reaction 7-phospho-2-dehydro-3-deoxy-D-arabino-heptonate = 3-dehydroquinate + phosphate. The protein operates within metabolic intermediate biosynthesis; chorismate biosynthesis; chorismate from D-erythrose 4-phosphate and phosphoenolpyruvate: step 2/7. Functionally, catalyzes the conversion of 3-deoxy-D-arabino-heptulosonate 7-phosphate (DAHP) to dehydroquinate (DHQ). This chain is 3-dehydroquinate synthase, found in Staphylococcus carnosus (strain TM300).